The sequence spans 328 residues: GTP 3',8-cyclase (328 aa).

The Radical SAM core domain occupies 1–229; it reads MNTVDYLRIS…ESFVPGNGPA (229 aa). R8 is a binding site for GTP. Residues C15 and C19 each contribute to the [4Fe-4S] cluster site. Y21 is an S-adenosyl-L-methionine binding site. C22 is a binding site for [4Fe-4S] cluster. R60 is a GTP binding site. G64 provides a ligand contact to S-adenosyl-L-methionine. Residue T91 coordinates GTP. S115 contributes to the S-adenosyl-L-methionine binding site. Position 155 (K155) interacts with GTP. An S-adenosyl-L-methionine-binding site is contributed by M189. Residues C252 and C255 each coordinate [4Fe-4S] cluster. 257 to 259 lines the GTP pocket; sequence RMR. Residue C269 participates in [4Fe-4S] cluster binding.

This sequence belongs to the radical SAM superfamily. MoaA family. In terms of assembly, monomer and homodimer. [4Fe-4S] cluster is required as a cofactor.

The catalysed reaction is GTP + AH2 + S-adenosyl-L-methionine = (8S)-3',8-cyclo-7,8-dihydroguanosine 5'-triphosphate + 5'-deoxyadenosine + L-methionine + A + H(+). The protein operates within cofactor biosynthesis; molybdopterin biosynthesis. Its function is as follows. Catalyzes the cyclization of GTP to (8S)-3',8-cyclo-7,8-dihydroguanosine 5'-triphosphate. In Trichodesmium erythraeum (strain IMS101), this protein is GTP 3',8-cyclase.